A 481-amino-acid polypeptide reads, in one-letter code: Putative cytochrome P450 520B1 (481 aa).

Residue C427 participates in heme binding.

Belongs to the cytochrome P450 family. Requires heme as cofactor.

In Dictyostelium discoideum (Social amoeba), this protein is Putative cytochrome P450 520B1 (cyp520B1).